A 369-amino-acid polypeptide reads, in one-letter code: Putative protein FAM10A5 (369 aa).

The disordered stretch occupies residues Met-38–Glu-98. Positions Ala-49–Glu-73 are enriched in basic and acidic residues. Acidic residues predominate over residues Ile-89–Glu-98. 3 TPR repeats span residues Ala-114–Leu-147, Ile-149–Ser-181, and Gln-183–Glu-215. Residues Lys-256–Arg-272 are compositionally biased toward basic and acidic residues. A disordered region spans residues Lys-256 to Met-300. The span at Phe-281–Met-300 shows a compositional bias: gly residues. The 40-residue stretch at Asp-319 to Ile-358 folds into the STI1 domain. Ser-346 is subject to Phosphoserine. An N6-acetyllysine mark is found at Lys-353 and Lys-360.

This sequence belongs to the FAM10 family.

The protein localises to the cytoplasm. The polypeptide is Putative protein FAM10A5 (ST13P5) (Homo sapiens (Human)).